A 365-amino-acid chain; its full sequence is MKFLLTTAQGIEDIAKREVSLLLKKLGISFQIEEKPLGIEGRLLLEAEKAYYVDEKGRKRELSISTYLNENSRLLHRVIIEIASEKFNGIEKDESEEALKRIKDFVSSLPVEQFVKVSETFAVRSFRKGDHNITSIDIARTVGEAIFERLSRFGTPLVNLDHPAVIFRAELIKDVFFLGIDTTGDSSLHKRPWRVYDHPAHLKASIANAMIELAELDGGSVLDPMCGSGTILIELALRRYSGEIIGIEKYRKHLIGAEMNALAAGVLDKIKFIQGDATQLSQYVDSVDFAISNLPYGLKIGKKSMIPDLYMKFFNELAKVLEKRGVFITTEKKAIEEAIAENGFEIIHHRVIGHGGLMVHLYVVK.

One can recognise a THUMP domain in the interval 69–182 (NENSRLLHRV…KDVFFLGIDT (114 aa)). Residues 198-202 (HPAHL), 228-230 (SGT), E248, 276-277 (DA), and N293 contribute to the S-adenosyl-L-methionine site.

This sequence belongs to the methyltransferase superfamily. Monomer in solution.

It localises to the cytoplasm. The catalysed reaction is guanosine(6) in tRNA + S-adenosyl-L-methionine = N(2)-methylguanosine(6) in tRNA + S-adenosyl-L-homocysteine + H(+). Its function is as follows. S-adenosyl-L-methionine-dependent methyltransferase that catalyzes the methylation of the guanosine nucleotide at position 6 (m2G6) in tRNA(Phe). The chain is tRNA (guanine(6)-N2)-methyltransferase from Pyrococcus furiosus (strain ATCC 43587 / DSM 3638 / JCM 8422 / Vc1).